Here is a 272-residue protein sequence, read N- to C-terminus: Ribonuclease 3 (272 aa).

A compositionally biased stretch (polar residues) spans 1 to 20 (MTDDVTNVEQPSTASEQQPQ). Positions 1-38 (MTDDVTNVEQPSTASEQQPQDVPAAEPSAAKKRRANKA) are disordered. Positions 44–171 (AAAIEQRLGH…VIGAIYLDGG (128 aa)) constitute an RNase III domain. Glu84 contributes to the Mg(2+) binding site. Asp88 is a catalytic residue. Residues Asp157 and Glu160 each contribute to the Mg(2+) site. Residue Glu160 is part of the active site. The DRBM domain occupies 196-265 (DPKTVLQEWA…ASAMLAREGV (70 aa)).

It belongs to the ribonuclease III family. Homodimer. Mg(2+) serves as cofactor.

The protein localises to the cytoplasm. It catalyses the reaction Endonucleolytic cleavage to 5'-phosphomonoester.. Functionally, digests double-stranded RNA. Involved in the processing of primary rRNA transcript to yield the immediate precursors to the large and small rRNAs (23S and 16S). Processes some mRNAs, and tRNAs when they are encoded in the rRNA operon. Processes pre-crRNA and tracrRNA of type II CRISPR loci if present in the organism. In Rhodopseudomonas palustris (strain ATCC BAA-98 / CGA009), this protein is Ribonuclease 3.